The primary structure comprises 900 residues: Probable 2-oxoadipate dehydrogenase complex component E1 homolog (900 aa).

This sequence belongs to the alpha-ketoglutarate dehydrogenase family. The cofactor is thiamine diphosphate.

It localises to the mitochondrion. It catalyses the reaction N(6)-[(R)-lipoyl]-L-lysyl-[protein] + 2-oxoadipate + H(+) = N(6)-[(R)-S(8)-glutaryldihydrolipoyl]-L-lysyl-[protein] + CO2. Its function is as follows. 2-oxoadipate dehydrogenase (E1a) component of the 2-oxoadipate dehydrogenase complex (OADHC). Participates in the first step, rate limiting for the overall conversion of 2-oxoadipate (alpha-ketoadipate) to glutaryl-CoA and CO(2) catalyzed by the whole OADHC. Catalyzes the irreversible decarboxylation of 2-oxoadipate via the thiamine diphosphate (ThDP) cofactor and subsequent transfer of the decarboxylated acyl intermediate on an oxidized dihydrolipoyl group that is covalently amidated to the E2 enzyme (dihydrolipoyllysine-residue succinyltransferase or DLST). The sequence is that of Probable 2-oxoadipate dehydrogenase complex component E1 homolog (odhA) from Dictyostelium discoideum (Social amoeba).